We begin with the raw amino-acid sequence, 568 residues long: Zinc finger protein 648 (568 aa).

Basic and acidic residues predominate over residues 1–11 (MAQVDSQDRWG). Positions 1–106 (MAQVDSQDRW…MSGKASWSRD (106 aa)) are disordered. C2H2-type zinc fingers lie at residues 279–301 (YACE…RRLH), 307–329 (YQCS…IRTH), 335–358 (YPCP…RNMH), 364–386 (FPCS…QRTH), 392–414 (FRCP…QRVH), 420–442 (FPCP…QTLH), 448–470 (FKCA…QRIH), 476–498 (FPCT…QQIH), 504–526 (FLCA…IRMH), and 532–554 (YQCE…RAKH). The disordered stretch occupies residues 548 to 568 (QRHRAKHGTCKKEPIPSSSDE).

Belongs to the krueppel C2H2-type zinc-finger protein family.

Its subcellular location is the nucleus. Its function is as follows. May be involved in transcriptional regulation. This Homo sapiens (Human) protein is Zinc finger protein 648 (ZNF648).